Here is a 454-residue protein sequence, read N- to C-terminus: Carbon catabolite repressor protein 4 homolog 5 (454 aa).

The tract at residues 1-76 (MSGYERKNTT…SLRRRRRTKE (76 aa)) is disordered. The span at 31-41 (VYEKSNRKESI) shows a compositional bias: basic and acidic residues. Basic residues predominate over residues 61–75 (VRHSKSSLRRRRRTK). Glu153 is a Mg(2+) binding site.

This sequence belongs to the CCR4/nocturin family. Component of the CCR4-NOT complex, at least composed of CRR4 and CAF1 proteins. It depends on Mg(2+) as a cofactor.

It is found in the nucleus. The protein localises to the cytoplasm. The enzyme catalyses Exonucleolytic cleavage of poly(A) to 5'-AMP.. Acts as a catalytic component of the CCR4-NOT core complex, which in the nucleus seems to be a general transcription factor, and in the cytoplasm the major mRNA deadenylase involved in mRNA turnover. The chain is Carbon catabolite repressor protein 4 homolog 5 (CCR4-5) from Arabidopsis thaliana (Mouse-ear cress).